The primary structure comprises 396 residues: Elongation factor Tu (396 aa).

Residues Lys10–Val205 enclose the tr-type G domain. Residues Gly19–Thr26 are G1. Gly19–Thr26 provides a ligand contact to GTP. A Mg(2+)-binding site is contributed by Thr26. The interval Gly62–Asn66 is G2. The tract at residues Asp83–Gly86 is G3. Residues Asp83 to His87 and Asn138 to Asp141 contribute to the GTP site. Residues Asn138–Asp141 form a G4 region. The tract at residues Ser175 to Leu177 is G5.

It belongs to the TRAFAC class translation factor GTPase superfamily. Classic translation factor GTPase family. EF-Tu/EF-1A subfamily. As to quaternary structure, monomer.

It is found in the cytoplasm. It catalyses the reaction GTP + H2O = GDP + phosphate + H(+). GTP hydrolase that promotes the GTP-dependent binding of aminoacyl-tRNA to the A-site of ribosomes during protein biosynthesis. This chain is Elongation factor Tu, found in Mycobacterium leprae (strain Br4923).